The sequence spans 389 residues: 26S proteasome regulatory subunit 10B (389 aa).

N6-acetyllysine is present on lysine 72. Glycine 174 to threonine 181 lines the ATP pocket. Lysine 206 bears the N6-acetyllysine mark. Serine 244 bears the Phosphoserine mark.

It belongs to the AAA ATPase family. In terms of assembly, component of the 19S proteasome regulatory particle complex. The 26S proteasome consists of a 20S core particle (CP) and two 19S regulatory subunits (RP). The regulatory particle is made of a lid composed of 9 subunits, a base containing 6 ATPases including PSMC6 and few additional components. Interacts with PAAF1.

The protein localises to the cytoplasm. It localises to the nucleus. Functionally, component of the 26S proteasome, a multiprotein complex involved in the ATP-dependent degradation of ubiquitinated proteins. This complex plays a key role in the maintenance of protein homeostasis by removing misfolded or damaged proteins, which could impair cellular functions, and by removing proteins whose functions are no longer required. Therefore, the proteasome participates in numerous cellular processes, including cell cycle progression, apoptosis, or DNA damage repair. PSMC6 belongs to the heterohexameric ring of AAA (ATPases associated with diverse cellular activities) proteins that unfolds ubiquitinated target proteins that are concurrently translocated into a proteolytic chamber and degraded into peptides. The sequence is that of 26S proteasome regulatory subunit 10B (PSMC6) from Bos taurus (Bovine).